The sequence spans 730 residues: Dual function macrocyclase-peptidase POPB (730 aa).

Positions 1–34 (MSSVTWAPGNYPSTRRSDHVDTYQSASKGEVPVP) are disordered. Catalysis depends on charge relay system residues serine 577, aspartate 661, and histidine 698.

The protein belongs to the peptidase S9A family. Monomer.

The catalysed reaction is Hydrolysis of Pro-|-Xaa &gt;&gt; Ala-|-Xaa in oligopeptides.. In terms of biological role, dual function macrocyclase-peptidase involved in the biosynthesis of the highly toxic amanitin toxin family of macrocycles. Cleaves peptide bonds on the C-terminal side of prolyl residues. The enzyme first removes 10 residues from the N-terminus of a 35-residue substrate. Conformational trapping of the 25 amino-acid peptide forces the enzyme to release this intermediate rather than proceed to macrocyclization. The enzyme rebinds the 25 amino-acid peptide in a different conformation and catalyzes macrocyclization of the N-terminal eight residues. This is Dual function macrocyclase-peptidase POPB from Galerina marginata (strain CBS 339.88).